A 510-amino-acid chain; its full sequence is Inositol-3-phosphate synthase (510 aa).

NAD(+)-binding residues include Gly70, Gly71, Asn72, Asn73, Asp143, Ile180, Gln190, Arg193, Thr230, Ala231, Asn232, Thr233, Gly281, Ser282, Asp306, Ser309, Asn340, Asn341, Asp342, Lys355, Gly393, Asp394, Asp422, and Ser423.

Belongs to the myo-inositol 1-phosphate synthase family. NAD(+) is required as a cofactor.

It is found in the cytoplasm. The protein resides in the cytosol. The protein localises to the nucleus. It carries out the reaction D-glucose 6-phosphate = 1D-myo-inositol 3-phosphate. The protein operates within polyol metabolism; myo-inositol biosynthesis; myo-inositol from D-glucose 6-phosphate: step 1/2. Its function is as follows. Key enzyme in myo-inositol biosynthesis pathway that catalyzes the conversion of glucose 6-phosphate to 1-myo-inositol 1-phosphate in a NAD-dependent manner. The sequence is that of Inositol-3-phosphate synthase (INPS1) from Nicotiana paniculata.